A 403-amino-acid polypeptide reads, in one-letter code: Aminomethyltransferase, mitochondrial (403 aa).

The N-terminal 25 residues, 1–25 (MISQNIIKIIQKSNKRYFSSSNELK), are a transit peptide targeting the mitochondrion. Substrate-binding residues include Glu-225, Arg-260, and Tyr-400.

Belongs to the GcvT family. In terms of assembly, the glycine cleavage system is composed of four proteins: P, T, L and H.

It is found in the mitochondrion. The enzyme catalyses N(6)-[(R)-S(8)-aminomethyldihydrolipoyl]-L-lysyl-[protein] + (6S)-5,6,7,8-tetrahydrofolate = N(6)-[(R)-dihydrolipoyl]-L-lysyl-[protein] + (6R)-5,10-methylene-5,6,7,8-tetrahydrofolate + NH4(+). Its function is as follows. The glycine cleavage system catalyzes the degradation of glycine. This Dictyostelium discoideum (Social amoeba) protein is Aminomethyltransferase, mitochondrial (gcvT).